The chain runs to 255 residues: Imidazole glycerol phosphate synthase subunit HisF (255 aa).

Active-site residues include D12 and D131.

This sequence belongs to the HisA/HisF family. As to quaternary structure, heterodimer of HisH and HisF.

It localises to the cytoplasm. It catalyses the reaction 5-[(5-phospho-1-deoxy-D-ribulos-1-ylimino)methylamino]-1-(5-phospho-beta-D-ribosyl)imidazole-4-carboxamide + L-glutamine = D-erythro-1-(imidazol-4-yl)glycerol 3-phosphate + 5-amino-1-(5-phospho-beta-D-ribosyl)imidazole-4-carboxamide + L-glutamate + H(+). It functions in the pathway amino-acid biosynthesis; L-histidine biosynthesis; L-histidine from 5-phospho-alpha-D-ribose 1-diphosphate: step 5/9. IGPS catalyzes the conversion of PRFAR and glutamine to IGP, AICAR and glutamate. The HisF subunit catalyzes the cyclization activity that produces IGP and AICAR from PRFAR using the ammonia provided by the HisH subunit. The sequence is that of Imidazole glycerol phosphate synthase subunit HisF from Sphingopyxis alaskensis (strain DSM 13593 / LMG 18877 / RB2256) (Sphingomonas alaskensis).